The chain runs to 81 residues: Acyl carrier protein (81 aa).

In terms of domain architecture, Carrier spans 2-80; the sequence is ASNEEILAGL…DAVSYIASAQ (79 aa). An O-(pantetheine 4'-phosphoryl)serine modification is found at serine 40.

Belongs to the acyl carrier protein (ACP) family. 4'-phosphopantetheine is transferred from CoA to a specific serine of apo-ACP by AcpS. This modification is essential for activity because fatty acids are bound in thioester linkage to the sulfhydryl of the prosthetic group.

It is found in the cytoplasm. Its pathway is lipid metabolism; fatty acid biosynthesis. Its function is as follows. Carrier of the growing fatty acid chain in fatty acid biosynthesis. This Renibacterium salmoninarum (strain ATCC 33209 / DSM 20767 / JCM 11484 / NBRC 15589 / NCIMB 2235) protein is Acyl carrier protein.